The following is a 264-amino-acid chain: Thiazole synthase (264 aa).

The active-site Schiff-base intermediate with DXP is K106. 1-deoxy-D-xylulose 5-phosphate-binding positions include G167, 193 to 194 (AG), and 215 to 216 (NT).

It belongs to the ThiG family. As to quaternary structure, homotetramer. Forms heterodimers with either ThiH or ThiS.

Its subcellular location is the cytoplasm. The catalysed reaction is [ThiS sulfur-carrier protein]-C-terminal-Gly-aminoethanethioate + 2-iminoacetate + 1-deoxy-D-xylulose 5-phosphate = [ThiS sulfur-carrier protein]-C-terminal Gly-Gly + 2-[(2R,5Z)-2-carboxy-4-methylthiazol-5(2H)-ylidene]ethyl phosphate + 2 H2O + H(+). Its pathway is cofactor biosynthesis; thiamine diphosphate biosynthesis. In terms of biological role, catalyzes the rearrangement of 1-deoxy-D-xylulose 5-phosphate (DXP) to produce the thiazole phosphate moiety of thiamine. Sulfur is provided by the thiocarboxylate moiety of the carrier protein ThiS. In vitro, sulfur can be provided by H(2)S. This chain is Thiazole synthase, found in Xanthomonas campestris pv. campestris (strain 8004).